Here is a 329-residue protein sequence, read N- to C-terminus: Quinolinate synthase (329 aa).

The iminosuccinate site is built by histidine 44 and serine 61. Cysteine 106 provides a ligand contact to [4Fe-4S] cluster. Iminosuccinate contacts are provided by residues 132-134 (YIN) and serine 149. Residue cysteine 192 participates in [4Fe-4S] cluster binding. Iminosuccinate-binding positions include 218 to 220 (HPE) and threonine 235. Cysteine 285 serves as a coordination point for [4Fe-4S] cluster.

This sequence belongs to the quinolinate synthase family. Type 2 subfamily. [4Fe-4S] cluster serves as cofactor.

It is found in the plastid. Its subcellular location is the cyanelle. The catalysed reaction is iminosuccinate + dihydroxyacetone phosphate = quinolinate + phosphate + 2 H2O + H(+). It participates in cofactor biosynthesis; NAD(+) biosynthesis; quinolinate from iminoaspartate: step 1/1. Its function is as follows. Catalyzes the condensation of iminoaspartate with dihydroxyacetone phosphate to form quinolinate. The polypeptide is Quinolinate synthase (Cyanophora paradoxa).